We begin with the raw amino-acid sequence, 152 residues long: Deoxyuridine 5'-triphosphate nucleotidohydrolase (152 aa).

Substrate-binding positions include R71–G73, N84, L88–D90, and M98.

Belongs to the dUTPase family. It depends on Mg(2+) as a cofactor.

It carries out the reaction dUTP + H2O = dUMP + diphosphate + H(+). It participates in pyrimidine metabolism; dUMP biosynthesis; dUMP from dCTP (dUTP route): step 2/2. This enzyme is involved in nucleotide metabolism: it produces dUMP, the immediate precursor of thymidine nucleotides and it decreases the intracellular concentration of dUTP so that uracil cannot be incorporated into DNA. This is Deoxyuridine 5'-triphosphate nucleotidohydrolase from Shewanella sediminis (strain HAW-EB3).